The sequence spans 389 residues: MAEPDPSHPLETQAGKVQEAQDSDSDSEGGAAGGEADMDFLRNLFSQTLSLGSQKERLLDELTLEGVARYMQSERCRRVICLVGAGISTSAGIPDFRSPSTGLYDNLEKYHLPYPEAIFEISYFKKHPEPFFALAKELYPGQFKPTICHYFMRLLKDKGLLLRCYTQNIDTLERIAGLEQEDLVEAHGTFYTSHCVSASCRHEYPLSWMKEKIFSEVTPKCEDCQSLVKPDIVFFGESLPARFFSCMQSDFLKVDLLLVMGTSLQVQPFASLISKAPLSTPRLLINKEKAGQSDPFLGMILGLGGGMDFDSKKAYRDVAWLGDCDQGCLALAELLGWKKELEDLVRREHASIDAQSGAEAPNPSTSASPRKSPPPAQDEARTTEREKPQ.

The tract at residues 1 to 34 (MAEPDPSHPLETQAGKVQEAQDSDSDSEGGAAGG) is disordered. Residue Ala-2 is modified to N-acetylalanine. Ser-23, Ser-25, Ser-27, and Ser-53 each carry phosphoserine. The 282-residue stretch at 57–338 (RLLDELTLEG…LALAELLGWK (282 aa)) folds into the Deacetylase sirtuin-type domain. Residues 85–89 (AGIST) and 95–97 (DFR) each bind NAD(+). Ser-100 carries the phosphoserine modification. 167–170 (QNID) contacts NAD(+). The active-site Proton acceptor is the His-187. Positions 195 and 200 each coordinate Zn(2+). Ser-207 carries the phosphoserine modification. Cys-221 and Cys-224 together coordinate Zn(2+). NAD(+)-binding positions include 262–263 (TS), 286–288 (NKE), and Cys-324. Residues 350 to 389 (ASIDAQSGAEAPNPSTSASPRKSPPPAQDEARTTEREKPQ) are disordered. 2 positions are modified to phosphoserine: Ser-368 and Ser-372. Residues 378–389 (DEARTTEREKPQ) show a composition bias toward basic and acidic residues.

It belongs to the sirtuin family. Class I subfamily. Interacts with CDC20, FOXO3 and FZR1. Associates with microtubules in primary cortical mature neurons. Homotrimer. Interacts (via both phosphorylated, unphosphorylated, active or inactive forms) with HDAC6; the interaction is necessary for the complex to interact with alpha-tubulin, suggesting that these proteins belong to a large complex that deacetylates the cytoskeleton. Interacts with FOXO1; the interaction is disrupted upon serum-starvation or oxidative stress, leading to increased level of acetylated FOXO1 and induction of autophagy. Interacts with RELA; the interaction occurs in the cytoplasm and is increased in a TNF-alpha-dependent manner. Interacts with HOXA10; the interaction is direct. Interacts with YWHAB and YWHAG; the interactions occur in a AKT-dependent manner and increase SIRT2-dependent TP53 deacetylation. Interacts with MAPK1/ERK2 and MAPK3/ERK1; the interactions increase SIRT2 stability and deacetylation activity. Interacts (phosphorylated form) with KMT5A isoform 2; the interaction is direct, stimulates KMT5A-mediated methyltransferase activity on histone at 'Lys-20' (H4K20me1) and is increased in a H(2)O(2)-induced oxidative stress-dependent manner. Interacts with G6PD; the interaction is enhanced by H(2)O(2) treatment. Interacts with a G1/S-specific cyclin E-CDK2 complex. Interacts with AURKA, CDK5R1 (p35 form) and CDK5 and HIF1A. Interacts with the tRNA ligase SARS1; recruited to the VEGFA promoter via interaction with SARS1. Interacts with BEX4; negatively regulates alpha-tubulin deacetylation by SIRT2. Requires Zn(2+) as cofactor. In terms of processing, phosphorylated at phosphoserine and phosphothreonine. Phosphorylated at Ser-368 by a mitotic kinase CDK1/cyclin B at the G2/M transition; phosphorylation regulates the delay in cell-cycle progression. Phosphorylated at Ser-368 by a mitotic kinase G1/S-specific cyclin E/Cdk2 complex; phosphorylation inactivates SIRT2-mediated alpha-tubulin deacetylation and thereby negatively regulates cell adhesion, cell migration and neurite outgrowth during neuronal differentiation. Phosphorylated by cyclin A/Cdk2 and p35-Cdk5 complexes and to a lesser extent by the cyclin D3/Cdk4 and cyclin B/Cdk1, in vitro. Dephosphorylated at Ser-368 by CDC14A and CDC14B around early anaphase. Post-translationally, acetylated by EP300; acetylation leads both to the decreased of SIRT2-mediated alpha-tubulin deacetylase activity and SIRT2-mediated down-regulation of TP53 transcriptional activity. Ubiquitinated.

Its subcellular location is the nucleus. The protein localises to the cytoplasm. It is found in the perinuclear region. The protein resides in the cytoskeleton. It localises to the microtubule organizing center. Its subcellular location is the centrosome. The protein localises to the centriole. It is found in the spindle. The protein resides in the midbody. It localises to the chromosome. Its subcellular location is the perikaryon. The protein localises to the cell projection. It is found in the growth cone. The protein resides in the myelin membrane. The catalysed reaction is N(6)-acetyl-L-lysyl-[protein] + NAD(+) + H2O = 2''-O-acetyl-ADP-D-ribose + nicotinamide + L-lysyl-[protein]. It catalyses the reaction N(6)-tetradecanoyl-L-lysyl-[protein] + NAD(+) + H2O = 2''-O-tetradecanoyl-ADP-D-ribose + nicotinamide + L-lysyl-[protein]. It carries out the reaction N(6)-hexadecanoyl-L-lysyl-[protein] + NAD(+) + H2O = 2''-O-hexadecanoyl-ADP-D-ribose + nicotinamide + L-lysyl-[protein]. Inhibited by Sirtinol, A3 and M15 small molecules. Inhibited by nicotinamide. Functionally, NAD-dependent protein deacetylase, which deacetylates internal lysines on histone and alpha-tubulin as well as many other proteins such as key transcription factors. Participates in the modulation of multiple and diverse biological processes such as cell cycle control, genomic integrity, microtubule dynamics, cell differentiation, metabolic networks, and autophagy. Plays a major role in the control of cell cycle progression and genomic stability. Functions in the antephase checkpoint preventing precocious mitotic entry in response to microtubule stress agents, and hence allowing proper inheritance of chromosomes. Positively regulates the anaphase promoting complex/cyclosome (APC/C) ubiquitin ligase complex activity by deacetylating CDC20 and FZR1, then allowing progression through mitosis. Associates both with chromatin at transcriptional start sites (TSSs) and enhancers of active genes. Plays a role in cell cycle and chromatin compaction through epigenetic modulation of the regulation of histone H4 'Lys-20' methylation (H4K20me1) during early mitosis. Specifically deacetylates histone H4 at 'Lys-16' (H4K16ac) between the G2/M transition and metaphase enabling H4K20me1 deposition by KMT5A leading to ulterior levels of H4K20me2 and H4K20me3 deposition throughout cell cycle, and mitotic S-phase progression. Deacetylates KMT5A modulating KMT5A chromatin localization during the mitotic stress response. Also deacetylates histone H3 at 'Lys-57' (H3K56ac) during the mitotic G2/M transition. During oocyte meiosis progression, may deacetylate histone H4 at 'Lys-16' (H4K16ac) and alpha-tubulin, regulating spindle assembly and chromosome alignment by influencing microtubule dynamics and kinetochore function. Deacetylates histone H4 at 'Lys-16' (H4K16ac) at the VEGFA promoter and thereby contributes to regulate expression of VEGFA, a key regulator of angiogenesis. Deacetylates alpha-tubulin at 'Lys-40' and hence controls neuronal motility, oligodendroglial cell arbor projection processes and proliferation of non-neuronal cells. Phosphorylation at Ser-368 by a G1/S-specific cyclin E-CDK2 complex inactivates SIRT2-mediated alpha-tubulin deacetylation, negatively regulating cell adhesion, cell migration and neurite outgrowth during neuronal differentiation. Deacetylates PARD3 and participates in the regulation of Schwann cell peripheral myelination formation during early postnatal development and during postinjury remyelination. Involved in several cellular metabolic pathways. Plays a role in the regulation of blood glucose homeostasis by deacetylating and stabilizing phosphoenolpyruvate carboxykinase PCK1 activity in response to low nutrient availability. Acts as a key regulator in the pentose phosphate pathway (PPP) by deacetylating and activating the glucose-6-phosphate G6PD enzyme, and therefore, stimulates the production of cytosolic NADPH to counteract oxidative damage. Maintains energy homeostasis in response to nutrient deprivation as well as energy expenditure by inhibiting adipogenesis and promoting lipolysis. Attenuates adipocyte differentiation by deacetylating and promoting FOXO1 interaction to PPARG and subsequent repression of PPARG-dependent transcriptional activity. Plays a role in the regulation of lysosome-mediated degradation of protein aggregates by autophagy in neuronal cells. Deacetylates FOXO1 in response to oxidative stress or serum deprivation, thereby negatively regulating FOXO1-mediated autophagy. Deacetylates a broad range of transcription factors and co-regulators regulating target gene expression. Deacetylates transcriptional factor FOXO3 stimulating the ubiquitin ligase SCF(SKP2)-mediated FOXO3 ubiquitination and degradation. Deacetylates HIF1A and therefore promotes HIF1A degradation and inhibition of HIF1A transcriptional activity in tumor cells in response to hypoxia. Deacetylates RELA in the cytoplasm inhibiting NF-kappaB-dependent transcription activation upon TNF-alpha stimulation. Inhibits transcriptional activation by deacetylating p53/TP53 and EP300. Also deacetylates EIF5A. Functions as a negative regulator on oxidative stress-tolerance in response to anoxia-reoxygenation conditions. Plays a role as tumor suppressor. In addition to protein deacetylase activity, also has activity toward long-chain fatty acyl groups and mediates protein-lysine demyristoylation and depalmitoylation of target proteins, such as ARF6 and KRAS, thereby regulating their association with membranes. The protein is NAD-dependent protein deacetylase sirtuin-2 (SIRT2) of Macaca fascicularis (Crab-eating macaque).